The following is a 104-amino-acid chain: ATP synthase subunit c (104 aa).

2 helical membrane-spanning segments follow: residues 31 to 51 (SMIAAGLGLGLAALGGAIGMG) and 75 to 95 (MFIALAMIEAQVIYALVIALI).

This sequence belongs to the ATPase C chain family. F-type ATPases have 2 components, F(1) - the catalytic core - and F(0) - the membrane proton channel. F(1) has five subunits: alpha(3), beta(3), gamma(1), delta(1), epsilon(1). F(0) has three main subunits: a(1), b(2) and c(10-14). The alpha and beta chains form an alternating ring which encloses part of the gamma chain. F(1) is attached to F(0) by a central stalk formed by the gamma and epsilon chains, while a peripheral stalk is formed by the delta and b chains.

The protein resides in the cell inner membrane. Functionally, f(1)F(0) ATP synthase produces ATP from ADP in the presence of a proton or sodium gradient. F-type ATPases consist of two structural domains, F(1) containing the extramembraneous catalytic core and F(0) containing the membrane proton channel, linked together by a central stalk and a peripheral stalk. During catalysis, ATP synthesis in the catalytic domain of F(1) is coupled via a rotary mechanism of the central stalk subunits to proton translocation. Its function is as follows. Key component of the F(0) channel; it plays a direct role in translocation across the membrane. A homomeric c-ring of between 10-14 subunits forms the central stalk rotor element with the F(1) delta and epsilon subunits. This chain is ATP synthase subunit c, found in Sulfurimonas denitrificans (strain ATCC 33889 / DSM 1251) (Thiomicrospira denitrificans (strain ATCC 33889 / DSM 1251)).